Here is a 357-residue protein sequence, read N- to C-terminus: Spore wall and anchoring disk complex protein EnP1 (357 aa).

The first 16 residues, 1–16, serve as a signal peptide directing secretion; sequence MKLLGFLIVGLSAISA. N-linked (GlcNAc...) asparagine glycosylation occurs at Asn47. The HBM1 motif lies at 150–158; that stretch reads ERRPHYKKI. An HBM2 motif is present at residues 329-334; the sequence is LKKVRG.

Its subcellular location is the spore wall. The protein localises to the spore. It is found in the perispore. Its function is as follows. Spore wall protein involved in the adhesion to host cells surface glycoaminoglycans (GAGs). Microsporidian spore adherence is an integral part of activation and host cell invasion which requires the extrusion at the spore apex of a very long and coiled structure, the polar tube, through which the sporoplasm is pushed to enter into the potential host cell. The protein is Spore wall and anchoring disk complex protein EnP1 (EnP1) of Encephalitozoon cuniculi (strain GB-M1) (Microsporidian parasite).